The primary structure comprises 310 residues: Thiamine-monophosphate kinase (310 aa).

Mg(2+) is bound by residues Asp-26, Thr-40, Ser-41, and Asp-42. Asp-49 is a substrate binding site. Residues Asp-70 and Asp-118 each contribute to the Mg(2+) site. ATP-binding positions include 117 to 118 (GD) and Arg-141. A Mg(2+)-binding site is contributed by Asp-202. Ser-204 is a binding site for ATP. Position 205 (Asp-205) interacts with Mg(2+). 2 residues coordinate substrate: Glu-251 and Trp-299.

Belongs to the thiamine-monophosphate kinase family.

The catalysed reaction is thiamine phosphate + ATP = thiamine diphosphate + ADP. It functions in the pathway cofactor biosynthesis; thiamine diphosphate biosynthesis; thiamine diphosphate from thiamine phosphate: step 1/1. Catalyzes the ATP-dependent phosphorylation of thiamine-monophosphate (TMP) to form thiamine-pyrophosphate (TPP), the active form of vitamin B1. In Pyrococcus abyssi (strain GE5 / Orsay), this protein is Thiamine-monophosphate kinase.